A 221-amino-acid chain; its full sequence is Probable septum site-determining protein MinC (221 aa).

Belongs to the MinC family. In terms of assembly, interacts with MinD and FtsZ.

Its function is as follows. Cell division inhibitor that blocks the formation of polar Z ring septums. Rapidly oscillates between the poles of the cell to destabilize FtsZ filaments that have formed before they mature into polar Z rings. Prevents FtsZ polymerization. The sequence is that of Probable septum site-determining protein MinC from Shewanella frigidimarina (strain NCIMB 400).